The sequence spans 315 residues: UDP-3-O-acyl-N-acetylglucosamine deacetylase (315 aa).

Zn(2+) contacts are provided by H78, H235, and D239. H262 acts as the Proton donor in catalysis.

The protein belongs to the LpxC family. Zn(2+) is required as a cofactor.

The catalysed reaction is a UDP-3-O-[(3R)-3-hydroxyacyl]-N-acetyl-alpha-D-glucosamine + H2O = a UDP-3-O-[(3R)-3-hydroxyacyl]-alpha-D-glucosamine + acetate. Its pathway is glycolipid biosynthesis; lipid IV(A) biosynthesis; lipid IV(A) from (3R)-3-hydroxytetradecanoyl-[acyl-carrier-protein] and UDP-N-acetyl-alpha-D-glucosamine: step 2/6. Functionally, catalyzes the hydrolysis of UDP-3-O-myristoyl-N-acetylglucosamine to form UDP-3-O-myristoylglucosamine and acetate, the committed step in lipid A biosynthesis. This Syntrophus aciditrophicus (strain SB) protein is UDP-3-O-acyl-N-acetylglucosamine deacetylase.